Here is a 301-residue protein sequence, read N- to C-terminus: Pyridoxal 5'-phosphate synthase subunit PdxS (301 aa).

D31 contributes to the D-ribose 5-phosphate binding site. The active-site Schiff-base intermediate with D-ribose 5-phosphate is K88. G160 contacts D-ribose 5-phosphate. K172 is a D-glyceraldehyde 3-phosphate binding site. D-ribose 5-phosphate is bound by residues G221 and 242-243 (GS).

This sequence belongs to the PdxS/SNZ family. As to quaternary structure, in the presence of PdxT, forms a dodecamer of heterodimers.

It catalyses the reaction aldehydo-D-ribose 5-phosphate + D-glyceraldehyde 3-phosphate + L-glutamine = pyridoxal 5'-phosphate + L-glutamate + phosphate + 3 H2O + H(+). It functions in the pathway cofactor biosynthesis; pyridoxal 5'-phosphate biosynthesis. Catalyzes the formation of pyridoxal 5'-phosphate from ribose 5-phosphate (RBP), glyceraldehyde 3-phosphate (G3P) and ammonia. The ammonia is provided by the PdxT subunit. Can also use ribulose 5-phosphate and dihydroxyacetone phosphate as substrates, resulting from enzyme-catalyzed isomerization of RBP and G3P, respectively. This Methanosarcina acetivorans (strain ATCC 35395 / DSM 2834 / JCM 12185 / C2A) protein is Pyridoxal 5'-phosphate synthase subunit PdxS.